The chain runs to 408 residues: DNA primase DnaG (408 aa).

A Toprim domain is found at 165 to 243 (PELIIVEGRA…KIDYVARAPT (79 aa)). Glu-171, Asp-216, and Asp-218 together coordinate Mg(2+).

This sequence belongs to the archaeal DnaG primase family. In terms of assembly, forms a ternary complex with MCM helicase and DNA. Component of the archaeal exosome complex. Mg(2+) serves as cofactor.

The catalysed reaction is ssDNA + n NTP = ssDNA/pppN(pN)n-1 hybrid + (n-1) diphosphate.. Functionally, RNA polymerase that catalyzes the synthesis of short RNA molecules used as primers for DNA polymerase during DNA replication. Also part of the exosome, which is a complex involved in RNA degradation. Acts as a poly(A)-binding protein that enhances the interaction between heteromeric, adenine-rich transcripts and the exosome. The sequence is that of DNA primase DnaG from Sulfurisphaera tokodaii (strain DSM 16993 / JCM 10545 / NBRC 100140 / 7) (Sulfolobus tokodaii).